The following is a 300-amino-acid chain: 2-dehydropantoate 2-reductase (300 aa).

Residues 7-12, Lys74, Asn99, and Ala123 contribute to the NADP(+) site; that span reads GAGAIG. The active-site Proton donor is the Lys179. Residues Lys179, Asn183, Asn187, Asn197, and 246-249 contribute to the substrate site; that span reads NYNS. Glu261 contacts NADP(+).

This sequence belongs to the ketopantoate reductase family.

It localises to the cytoplasm. It catalyses the reaction (R)-pantoate + NAD(+) = 2-dehydropantoate + NADH + H(+). It carries out the reaction (R)-pantoate + NADP(+) = 2-dehydropantoate + NADPH + H(+). The protein operates within cofactor biosynthesis; coenzyme A biosynthesis. Functionally, catalyzes the NAD(P)H-dependent reduction of ketopantoate into pantoic acid. This Pyrococcus abyssi (strain GE5 / Orsay) protein is 2-dehydropantoate 2-reductase (apbA).